We begin with the raw amino-acid sequence, 94 residues long: Small ribosomal subunit protein uS19 (94 aa).

It belongs to the universal ribosomal protein uS19 family.

Its function is as follows. Protein S19 forms a complex with S13 that binds strongly to the 16S ribosomal RNA. The sequence is that of Small ribosomal subunit protein uS19 from Wolbachia sp. subsp. Brugia malayi (strain TRS).